The sequence spans 456 residues: Sulfate adenylyltransferase (456 aa).

The protein belongs to the sulfate adenylyltransferase family.

It carries out the reaction sulfate + ATP + H(+) = adenosine 5'-phosphosulfate + diphosphate. It functions in the pathway sulfur metabolism; hydrogen sulfide biosynthesis; sulfite from sulfate: step 1/3. This chain is Sulfate adenylyltransferase (sat), found in Archaeoglobus fulgidus (strain ATCC 49558 / DSM 4304 / JCM 9628 / NBRC 100126 / VC-16).